Here is a 309-residue protein sequence, read N- to C-terminus: Porphobilinogen deaminase (309 aa).

Cysteine 244 is subject to S-(dipyrrolylmethanemethyl)cysteine.

This sequence belongs to the HMBS family. As to quaternary structure, monomer. Dipyrromethane is required as a cofactor.

It catalyses the reaction 4 porphobilinogen + H2O = hydroxymethylbilane + 4 NH4(+). It functions in the pathway porphyrin-containing compound metabolism; protoporphyrin-IX biosynthesis; coproporphyrinogen-III from 5-aminolevulinate: step 2/4. In terms of biological role, tetrapolymerization of the monopyrrole PBG into the hydroxymethylbilane pre-uroporphyrinogen in several discrete steps. In Agrobacterium fabrum (strain C58 / ATCC 33970) (Agrobacterium tumefaciens (strain C58)), this protein is Porphobilinogen deaminase.